Reading from the N-terminus, the 78-residue chain is Large ribosomal subunit protein bL28 (78 aa).

It belongs to the bacterial ribosomal protein bL28 family.

The protein is Large ribosomal subunit protein bL28 of Thiobacillus denitrificans (strain ATCC 25259 / T1).